We begin with the raw amino-acid sequence, 125 residues long: Small ribosomal subunit protein uS13 (125 aa).

Residues 92 to 125 form a disordered region; sequence RRSLPVRGQNTQTNARTRKGKRKTVAGKKKAARK. Over residues 107 to 125 the composition is skewed to basic residues; the sequence is RTRKGKRKTVAGKKKAARK.

Belongs to the universal ribosomal protein uS13 family. In terms of assembly, part of the 30S ribosomal subunit. Forms a loose heterodimer with protein S19. Forms two bridges to the 50S subunit in the 70S ribosome.

Functionally, located at the top of the head of the 30S subunit, it contacts several helices of the 16S rRNA. In the 70S ribosome it contacts the 23S rRNA (bridge B1a) and protein L5 of the 50S subunit (bridge B1b), connecting the 2 subunits; these bridges are implicated in subunit movement. Contacts the tRNAs in the A and P-sites. This is Small ribosomal subunit protein uS13 from Chlorobium luteolum (strain DSM 273 / BCRC 81028 / 2530) (Pelodictyon luteolum).